A 64-amino-acid chain; its full sequence is Large ribosomal subunit protein bL35 (64 aa).

The segment covering 1–10 has biased composition (polar residues); that stretch reads MPKMKTNSAA. The interval 1 to 64 is disordered; the sequence is MPKMKTNSAA…SKNMKKLLGR (64 aa).

The protein belongs to the bacterial ribosomal protein bL35 family.

In Bifidobacterium adolescentis (strain ATCC 15703 / DSM 20083 / NCTC 11814 / E194a), this protein is Large ribosomal subunit protein bL35.